The following is a 146-amino-acid chain: NADH-ubiquinone oxidoreductase chain 6 (146 aa).

Helical transmembrane passes span 10–30 (LTAI…ILFV), 41–61 (FVLM…MLFL), 75–95 (GTIT…LDIT), and 124–144 (AMLL…AMSI).

The protein belongs to the complex I subunit 6 family.

It is found in the mitochondrion membrane. It carries out the reaction a ubiquinone + NADH + 5 H(+)(in) = a ubiquinol + NAD(+) + 4 H(+)(out). Its function is as follows. Core subunit of the mitochondrial membrane respiratory chain NADH dehydrogenase (Complex I) that is believed to belong to the minimal assembly required for catalysis. Complex I functions in the transfer of electrons from NADH to the respiratory chain. The immediate electron acceptor for the enzyme is believed to be ubiquinone. In Debaryomyces hansenii (strain ATCC 36239 / CBS 767 / BCRC 21394 / JCM 1990 / NBRC 0083 / IGC 2968) (Yeast), this protein is NADH-ubiquinone oxidoreductase chain 6 (ND6).